Here is an 89-residue protein sequence, read N- to C-terminus: Small ribosomal subunit protein uS17 (89 aa).

It belongs to the universal ribosomal protein uS17 family. In terms of assembly, part of the 30S ribosomal subunit.

Functionally, one of the primary rRNA binding proteins, it binds specifically to the 5'-end of 16S ribosomal RNA. This is Small ribosomal subunit protein uS17 from Chlorobaculum tepidum (strain ATCC 49652 / DSM 12025 / NBRC 103806 / TLS) (Chlorobium tepidum).